Reading from the N-terminus, the 526-residue chain is Glucose-6-phosphate 1-dehydrogenase (526 aa).

Residues 50–57, R84, and K184 each bind NADP(+); that span reads GASGDLAK. Residues K184, 214–218, E252, and D271 each bind D-glucose 6-phosphate; that span reads HYLGK. Catalysis depends on H276, which acts as the Proton acceptor. R370 lines the NADP(+) pocket. 2 residues coordinate D-glucose 6-phosphate: K373 and R378. NADP(+)-binding residues include K379, R383, and R406. Position 408 (Q408) interacts with D-glucose 6-phosphate. NADP(+) contacts are provided by residues 414–416, 434–436, R500, Y516, and W522; these read YFK and DLT.

Belongs to the glucose-6-phosphate dehydrogenase family.

The protein localises to the cytoplasm. Its subcellular location is the cytosol. The enzyme catalyses D-glucose 6-phosphate + NADP(+) = 6-phospho-D-glucono-1,5-lactone + NADPH + H(+). It participates in carbohydrate degradation; pentose phosphate pathway; D-ribulose 5-phosphate from D-glucose 6-phosphate (oxidative stage): step 1/3. Cytosolic glucose-6-phosphate dehydrogenase that catalyzes the first and rate-limiting step of the oxidative branch within the pentose phosphate pathway/shunt, an alternative route to glycolysis for the dissimilation of carbohydrates and a major source of reducing power and metabolic intermediates for fatty acid and nucleic acid biosynthetic processes. This is Glucose-6-phosphate 1-dehydrogenase (ZW) from Ceratitis capitata (Mediterranean fruit fly).